The primary structure comprises 361 residues: S-adenosylmethionine:tRNA ribosyltransferase-isomerase (361 aa).

The protein belongs to the QueA family. In terms of assembly, monomer.

The protein localises to the cytoplasm. The catalysed reaction is 7-aminomethyl-7-carbaguanosine(34) in tRNA + S-adenosyl-L-methionine = epoxyqueuosine(34) in tRNA + adenine + L-methionine + 2 H(+). Its pathway is tRNA modification; tRNA-queuosine biosynthesis. Transfers and isomerizes the ribose moiety from AdoMet to the 7-aminomethyl group of 7-deazaguanine (preQ1-tRNA) to give epoxyqueuosine (oQ-tRNA). This chain is S-adenosylmethionine:tRNA ribosyltransferase-isomerase, found in Actinobacillus pleuropneumoniae serotype 5b (strain L20).